Consider the following 378-residue polypeptide: tRNA (guanine(26)-N(2))-dimethyltransferase (378 aa).

Residues 4-374 (KEVTEGKVRI…KGYEEIIRCV (371 aa)) enclose the Trm1 methyltransferase domain. The S-adenosyl-L-methionine site is built by Arg-44, Arg-69, Asp-87, Asp-114, and Ala-115. The Zn(2+) site is built by Cys-246, Cys-249, Cys-263, and Cys-266.

The protein belongs to the class I-like SAM-binding methyltransferase superfamily. Trm1 family.

The enzyme catalyses guanosine(26) in tRNA + 2 S-adenosyl-L-methionine = N(2)-dimethylguanosine(26) in tRNA + 2 S-adenosyl-L-homocysteine + 2 H(+). In terms of biological role, dimethylates a single guanine residue at position 26 of a number of tRNAs using S-adenosyl-L-methionine as donor of the methyl groups. This Saccharolobus islandicus (strain L.S.2.15 / Lassen #1) (Sulfolobus islandicus) protein is tRNA (guanine(26)-N(2))-dimethyltransferase.